We begin with the raw amino-acid sequence, 394 residues long: Protein STRICTOSIDINE SYNTHASE-LIKE 1 (394 aa).

The N-terminal stretch at 1-21 (MESLLLIAYAFLYLFLLSHEA) is a signal peptide. Residues 61–73 (GLEKRPNHSEDNP) are compositionally biased toward basic and acidic residues. The disordered stretch occupies residues 61 to 92 (GLEKRPNHSEDNPPSRGWTGEPGLDPRGEGPY). N-linked (GlcNAc...) asparagine glycosylation is found at asparagine 67, asparagine 122, and asparagine 196.

This sequence belongs to the strictosidine synthase family.

The protein resides in the vacuole. This chain is Protein STRICTOSIDINE SYNTHASE-LIKE 1, found in Arabidopsis thaliana (Mouse-ear cress).